Reading from the N-terminus, the 108-residue chain is ATP-dependent Clp protease adapter protein ClpS (108 aa).

Over residues 1–15 (MPRESSPDSHHEHGV) the composition is skewed to basic and acidic residues. The interval 1–24 (MPRESSPDSHHEHGVAVEPARPEV) is disordered.

This sequence belongs to the ClpS family. Binds to the N-terminal domain of the chaperone ClpA.

In terms of biological role, involved in the modulation of the specificity of the ClpAP-mediated ATP-dependent protein degradation. The polypeptide is ATP-dependent Clp protease adapter protein ClpS (Stenotrophomonas maltophilia (strain R551-3)).